We begin with the raw amino-acid sequence, 208 residues long: Large ribosomal subunit protein bL25 (208 aa).

It belongs to the bacterial ribosomal protein bL25 family. CTC subfamily. In terms of assembly, part of the 50S ribosomal subunit; part of the 5S rRNA/L5/L18/L25 subcomplex. Contacts the 5S rRNA. Binds to the 5S rRNA independently of L5 and L18.

This is one of the proteins that binds to the 5S RNA in the ribosome where it forms part of the central protuberance. The sequence is that of Large ribosomal subunit protein bL25 from Paracoccus denitrificans (strain Pd 1222).